The primary structure comprises 169 residues: Photosystem I assembly protein Ycf3 (169 aa).

3 TPR repeats span residues 35–68 (AFSY…EIDP), 72–105 (SYIL…NPAL), and 120–153 (GEQA…APSN).

It belongs to the Ycf3 family.

The protein localises to the plastid. Its subcellular location is the chloroplast thylakoid membrane. Essential for the assembly of the photosystem I (PSI) complex. May act as a chaperone-like factor to guide the assembly of the PSI subunits. In Chaetosphaeridium globosum (Charophycean green alga), this protein is Photosystem I assembly protein Ycf3.